A 1252-amino-acid chain; its full sequence is DNA-directed RNA polymerase subunit beta (1252 aa).

The protein belongs to the RNA polymerase beta chain family. As to quaternary structure, the RNAP catalytic core consists of 2 alpha, 1 beta, 1 beta' and 1 omega subunit. When a sigma factor is associated with the core the holoenzyme is formed, which can initiate transcription.

The enzyme catalyses RNA(n) + a ribonucleoside 5'-triphosphate = RNA(n+1) + diphosphate. In terms of biological role, DNA-dependent RNA polymerase catalyzes the transcription of DNA into RNA using the four ribonucleoside triphosphates as substrates. This Chlamydia trachomatis serovar L2 (strain ATCC VR-902B / DSM 19102 / 434/Bu) protein is DNA-directed RNA polymerase subunit beta.